The chain runs to 126 residues: Sperm-specific H1/protamine-like protein type 2 (126 aa).

The 80-residue stretch at 5–84 (KKPTTLSMIV…GATGSFRVGK (80 aa)) folds into the H15 domain. Positions 74–126 (SGATGSFRVGKAPASPKKAKKAKSPKKKSSKKSKNKSNNAKAKKSPKKKADSN) are disordered. A compositionally biased stretch (basic residues) spans 90–120 (KKAKKAKSPKKKSSKKSKNKSNNAKAKKSPK).

Post-translationally, OE2 and OE3 are produced by post-translational cleavage of a common precursor. In terms of tissue distribution, sperm.

It is found in the nucleus. The protein resides in the chromosome. In terms of biological role, linker histones are implicated in chromatin remodeling and/or transcriptional regulation during spermiogenesis, the process of spermatid maturation into spermatozoa. Protamines substitute for histones in the chromatin of sperm during the haploid phase of spermatogenesis. They compact sperm DNA into a highly condensed, stable and inactive complex. The chain is Sperm-specific H1/protamine-like protein type 2 from Ostrea edulis (Native oyster).